Reading from the N-terminus, the 163-residue chain is Bursicon (163 aa).

A signal peptide spans 1 to 23 (MKSTFLVVLELAFFLLPGRVLYA). Disulfide bonds link cysteine 39–cysteine 88, cysteine 53–cysteine 102, cysteine 63–cysteine 123, cysteine 67–cysteine 125, and cysteine 85–cysteine 128. Positions 39 to 129 (CQVTPVIHVL…PLECMCRPCT (91 aa)) constitute a CTCK domain.

Heterodimer of burs and pburs.

It localises to the secreted. In terms of biological role, final heterodimeric neurohormone released at the end of the molting cycle, involved in the sclerotization (tanning) of the insect cuticle, melanization and wing spreading. The sequence is that of Bursicon (burs124) from Anopheles gambiae (African malaria mosquito).